The primary structure comprises 155 residues: Microsomal glutathione S-transferase 1 (155 aa).

At 3–9 the chain is on the lumenal side; it reads DLTQVMD. The helical transmembrane segment at 10-33 threads the bilayer; it reads DEVFMAFASYATIILSKMMLMSTA. Residues 34 to 62 are Cytoplasmic-facing; that stretch reads TAFYRLTRKVFANPEDCVAFGKGENAKKY. Glutathione is bound at residue Arg38. Lys42, Lys55, and Lys60 each carry N6-acetyllysine. Residues 63–96 traverse the membrane as a helical segment; sequence LRTDDRVERVRRAHLNDLENIIPFLGIGLLYSLS. Glutathione-binding residues include Arg73, Arg74, His76, and Glu81. Residues 97–99 lie on the Lumenal side of the membrane; that stretch reads GPD. The helical transmembrane segment at 100 to 123 threads the bilayer; the sequence is PSTAILHFRLFVGARIYHTIAYLT. Tyr121 contributes to the glutathione binding site. Topologically, residues 124 to 128 are cytoplasmic; the sequence is PLPQP. A helical transmembrane segment spans residues 129–148; sequence NRALSFFVGYGVTLSMAYRL. Residues 149-155 are Lumenal-facing; that stretch reads LKSKLYL.

Belongs to the MAPEG family. As to quaternary structure, homotrimer; The trimer binds only one molecule of glutathione. In terms of tissue distribution, highly expressed in liver.

Its subcellular location is the endoplasmic reticulum membrane. The protein resides in the mitochondrion outer membrane. It carries out the reaction RX + glutathione = an S-substituted glutathione + a halide anion + H(+). In terms of biological role, conjugation of reduced glutathione to a wide number of exogenous and endogenous hydrophobic electrophiles. The protein is Microsomal glutathione S-transferase 1 (MGST1) of Homo sapiens (Human).